The following is a 101-amino-acid chain: UPF0235 protein Cphamn1_2066 (101 aa).

The protein belongs to the UPF0235 family.

This chain is UPF0235 protein Cphamn1_2066, found in Chlorobium phaeobacteroides (strain BS1).